A 218-amino-acid polypeptide reads, in one-letter code: Uracil-DNA glycosylase (218 aa).

The active-site Proton acceptor is Asp68.

The protein belongs to the uracil-DNA glycosylase (UDG) superfamily. UNG family. As to quaternary structure, homodimer. Interacts with protein OPG148. Component of the Uracil-DNA glycosylase(UDG)-OPG148-polymerase complex; OPG148 and UDG form a heterodimeric processivity factor that associates with OPG71 to form the processive polymerase holoenzyme.

The catalysed reaction is Hydrolyzes single-stranded DNA or mismatched double-stranded DNA and polynucleotides, releasing free uracil.. Its function is as follows. Plays an essential role in viral replication as a component of the DNA polymerase processivity factor. Excises uracil residues from the DNA which can arise as a result of misincorporation of dUMP residues by DNA polymerase or due to deamination of cytosine. This is Uracil-DNA glycosylase (OPG116) from Bos taurus (Bovine).